The following is a 274-amino-acid chain: S-adenosylmethionine decarboxylase proenzyme (274 aa).

Serine 119 functions as the Schiff-base intermediate with substrate; via pyruvic acid in the catalytic mechanism. The residue at position 119 (serine 119) is a Pyruvic acid (Ser); by autocatalysis. Histidine 124 (proton acceptor; for processing activity) is an active-site residue. Cysteine 147 (proton donor; for catalytic activity) is an active-site residue.

Belongs to the prokaryotic AdoMetDC family. Type 2 subfamily. Heterooctamer of four alpha and four beta chains arranged as a tetramer of alpha/beta heterodimers. Requires pyruvate as cofactor. Post-translationally, is synthesized initially as an inactive proenzyme. Formation of the active enzyme involves a self-maturation process in which the active site pyruvoyl group is generated from an internal serine residue via an autocatalytic post-translational modification. Two non-identical subunits are generated from the proenzyme in this reaction, and the pyruvate is formed at the N-terminus of the alpha chain, which is derived from the carboxyl end of the proenzyme. The post-translation cleavage follows an unusual pathway, termed non-hydrolytic serinolysis, in which the side chain hydroxyl group of the serine supplies its oxygen atom to form the C-terminus of the beta chain, while the remainder of the serine residue undergoes an oxidative deamination to produce ammonia and the pyruvoyl group blocking the N-terminus of the alpha chain.

The catalysed reaction is S-adenosyl-L-methionine + H(+) = S-adenosyl 3-(methylsulfanyl)propylamine + CO2. The protein operates within amine and polyamine biosynthesis; S-adenosylmethioninamine biosynthesis; S-adenosylmethioninamine from S-adenosyl-L-methionine: step 1/1. In terms of biological role, catalyzes the decarboxylation of S-adenosylmethionine to S-adenosylmethioninamine (dcAdoMet), the propylamine donor required for the synthesis of the polyamines spermine and spermidine from the diamine putrescine. The chain is S-adenosylmethionine decarboxylase proenzyme from Clostridium acetobutylicum (strain ATCC 824 / DSM 792 / JCM 1419 / IAM 19013 / LMG 5710 / NBRC 13948 / NRRL B-527 / VKM B-1787 / 2291 / W).